We begin with the raw amino-acid sequence, 438 residues long: Serine hydroxymethyltransferase (438 aa).

(6S)-5,6,7,8-tetrahydrofolate-binding positions include leucine 133 and glycine 137–leucine 139. At lysine 242 the chain carries N6-(pyridoxal phosphate)lysine.

It belongs to the SHMT family. As to quaternary structure, homodimer. Pyridoxal 5'-phosphate is required as a cofactor.

The protein localises to the cytoplasm. It catalyses the reaction (6R)-5,10-methylene-5,6,7,8-tetrahydrofolate + glycine + H2O = (6S)-5,6,7,8-tetrahydrofolate + L-serine. The protein operates within one-carbon metabolism; tetrahydrofolate interconversion. It functions in the pathway amino-acid biosynthesis; glycine biosynthesis; glycine from L-serine: step 1/1. In terms of biological role, catalyzes the reversible interconversion of serine and glycine with tetrahydrofolate (THF) serving as the one-carbon carrier. This reaction serves as the major source of one-carbon groups required for the biosynthesis of purines, thymidylate, methionine, and other important biomolecules. Also exhibits THF-independent aldolase activity toward beta-hydroxyamino acids, producing glycine and aldehydes, via a retro-aldol mechanism. In Brucella abortus (strain S19), this protein is Serine hydroxymethyltransferase.